Here is a 313-residue protein sequence, read N- to C-terminus: Acetaldehyde dehydrogenase (313 aa).

NAD(+) is bound at residue 15–18 (SGNI). C133 serves as the catalytic Acyl-thioester intermediate. NAD(+) is bound by residues 164-172 (SAGPGTRAN) and N289.

Belongs to the acetaldehyde dehydrogenase family.

The catalysed reaction is acetaldehyde + NAD(+) + CoA = acetyl-CoA + NADH + H(+). This is Acetaldehyde dehydrogenase from Rhizobium rhizogenes (strain K84 / ATCC BAA-868) (Agrobacterium radiobacter).